We begin with the raw amino-acid sequence, 474 residues long: 3-isopropylmalate dehydratase large subunit (474 aa).

[4Fe-4S] cluster is bound by residues cysteine 353, cysteine 414, and cysteine 417.

This sequence belongs to the aconitase/IPM isomerase family. LeuC type 1 subfamily. Heterodimer of LeuC and LeuD. Requires [4Fe-4S] cluster as cofactor.

It carries out the reaction (2R,3S)-3-isopropylmalate = (2S)-2-isopropylmalate. The protein operates within amino-acid biosynthesis; L-leucine biosynthesis; L-leucine from 3-methyl-2-oxobutanoate: step 2/4. In terms of biological role, catalyzes the isomerization between 2-isopropylmalate and 3-isopropylmalate, via the formation of 2-isopropylmaleate. This Xylella fastidiosa (strain M12) protein is 3-isopropylmalate dehydratase large subunit.